A 174-amino-acid chain; its full sequence is Frataxin homolog, mitochondrial (174 aa).

Residues 1-21 (MIKRSLASLVRVSSVMGRRYM) constitute a mitochondrion transit peptide.

Belongs to the frataxin family. Monomer. Forms a 24-mer complex made up of 8 copies of a trimeric subcomplex. Increments in mitochondrial iron uptake induce stepwise assembly of species ranging from trimers to 24-mers. Interacts with ISU1 with a 1 to 1 stoichiometry; the interaction is direct. Interacts with YHB1, SDH1, SDH2, AIM45 and CIR1. Post-translationally, processed in two steps by mitochondrial processing peptidase (MPP). MPP first cleaves the precursor to intermediate form and subsequently converts the intermediate to mature size protein.

Its subcellular location is the mitochondrion matrix. The enzyme catalyses 4 Fe(2+) + O2 + 4 H(+) = 4 Fe(3+) + 2 H2O. Its function is as follows. Promotes the biosynthesis of heme as well as the assembly and repair of iron-sulfur clusters by delivering Fe(2+) to proteins involved in these pathways. Plays a role in the protection against iron-catalyzed oxidative stress through its ability to catalyze the oxidation of Fe(2+) to Fe(3+). Can store large amounts of the metal in the form of a ferrihydrite mineral by oligomerization. May be involved in regulation of the mitochondrial electron transport chain. The chain is Frataxin homolog, mitochondrial from Saccharomyces cerevisiae (strain ATCC 204508 / S288c) (Baker's yeast).